A 617-amino-acid polypeptide reads, in one-letter code: 1-deoxy-D-xylulose-5-phosphate synthase (617 aa).

Thiamine diphosphate-binding positions include H76 and 117–119 (GHS). D148 provides a ligand contact to Mg(2+). Residues 149–150 (GA), N177, Y285, and E366 contribute to the thiamine diphosphate site. A Mg(2+)-binding site is contributed by N177.

Belongs to the transketolase family. DXPS subfamily. As to quaternary structure, homodimer. Requires Mg(2+) as cofactor. Thiamine diphosphate is required as a cofactor.

The catalysed reaction is D-glyceraldehyde 3-phosphate + pyruvate + H(+) = 1-deoxy-D-xylulose 5-phosphate + CO2. The protein operates within metabolic intermediate biosynthesis; 1-deoxy-D-xylulose 5-phosphate biosynthesis; 1-deoxy-D-xylulose 5-phosphate from D-glyceraldehyde 3-phosphate and pyruvate: step 1/1. In terms of biological role, catalyzes the acyloin condensation reaction between C atoms 2 and 3 of pyruvate and glyceraldehyde 3-phosphate to yield 1-deoxy-D-xylulose-5-phosphate (DXP). This chain is 1-deoxy-D-xylulose-5-phosphate synthase, found in Histophilus somni (strain 129Pt) (Haemophilus somnus).